The primary structure comprises 212 residues: Calaxin (212 aa).

3 EF-hand domains span residues 65–100 (TDDM…FLRG), 101–136 (TLDE…SLLK), and 146–181 (GIKD…ENLL). Ca(2+) contacts are provided by Asp78, Asp80, Asp82, Cys84, Glu89, Asp114, Asn116, Asp118, Glu125, Asp159, Asp161, Asp163, Lys165, and Asp170.

As to quaternary structure, component of the outer dynein arm-docking complex along with ODAD1, ODAD2, ODAD3 and ODAD4.

It is found in the cytoplasm. It localises to the cytoskeleton. Its subcellular location is the cilium axoneme. The protein resides in the cell projection. The protein localises to the cilium. It is found in the flagellum. Its function is as follows. Component of the outer dynein arm-docking complex (ODA-DC) that mediates outer dynein arms (ODA) binding onto the doublet microtubule. Seems to regulate the assembly of both ODAs and their axonemal docking complex onto ciliary microtubules. Regulates ciliary and flagellar motility and is required for cilia-driven determination of body laterality. This chain is Calaxin (Clxn), found in Mus musculus (Mouse).